We begin with the raw amino-acid sequence, 507 residues long: Histidine ammonia-lyase (507 aa).

The 5-imidazolinone (Ala-Gly) cross-link spans 142 to 144 (ASG). At serine 143 the chain carries 2,3-didehydroalanine (Ser).

Belongs to the PAL/histidase family. In terms of processing, contains an active site 4-methylidene-imidazol-5-one (MIO), which is formed autocatalytically by cyclization and dehydration of residues Ala-Ser-Gly.

The protein localises to the cytoplasm. The enzyme catalyses L-histidine = trans-urocanate + NH4(+). Its pathway is amino-acid degradation; L-histidine degradation into L-glutamate; N-formimidoyl-L-glutamate from L-histidine: step 1/3. This Maricaulis maris (strain MCS10) (Caulobacter maris) protein is Histidine ammonia-lyase.